The chain runs to 546 residues: Probable protein kinase UbiB (546 aa).

The region spanning 124-502 (DFSVEPLASA…HVRQGQSRYL (379 aa)) is the Protein kinase domain. ATP is bound by residues 130-138 (LASASIAQV) and K153. D288 (proton acceptor) is an active-site residue. Helical transmembrane passes span 501-521 (YLFG…IHRP) and 522-542 (EWGM…LIGW).

This sequence belongs to the ABC1 family. UbiB subfamily.

It is found in the cell inner membrane. It functions in the pathway cofactor biosynthesis; ubiquinone biosynthesis [regulation]. Functionally, is probably a protein kinase regulator of UbiI activity which is involved in aerobic coenzyme Q (ubiquinone) biosynthesis. This Klebsiella pneumoniae subsp. pneumoniae (strain ATCC 700721 / MGH 78578) protein is Probable protein kinase UbiB.